A 157-amino-acid polypeptide reads, in one-letter code: SsrA-binding protein (157 aa).

It belongs to the SmpB family.

The protein localises to the cytoplasm. Functionally, required for rescue of stalled ribosomes mediated by trans-translation. Binds to transfer-messenger RNA (tmRNA), required for stable association of tmRNA with ribosomes. tmRNA and SmpB together mimic tRNA shape, replacing the anticodon stem-loop with SmpB. tmRNA is encoded by the ssrA gene; the 2 termini fold to resemble tRNA(Ala) and it encodes a 'tag peptide', a short internal open reading frame. During trans-translation Ala-aminoacylated tmRNA acts like a tRNA, entering the A-site of stalled ribosomes, displacing the stalled mRNA. The ribosome then switches to translate the ORF on the tmRNA; the nascent peptide is terminated with the 'tag peptide' encoded by the tmRNA and targeted for degradation. The ribosome is freed to recommence translation, which seems to be the essential function of trans-translation. This Chlorobium phaeovibrioides (strain DSM 265 / 1930) (Prosthecochloris vibrioformis (strain DSM 265)) protein is SsrA-binding protein.